The sequence spans 155 residues: Large ribosomal subunit protein eL24 (155 aa).

The tract at residues A92–R155 is disordered. Residues M96–K117 are compositionally biased toward basic and acidic residues. A compositionally biased stretch (low complexity) spans K124 to K133.

It belongs to the eukaryotic ribosomal protein eL24 family.

The chain is Large ribosomal subunit protein eL24 (RpL24) from Spodoptera frugiperda (Fall armyworm).